The chain runs to 488 residues: Cardiolipin synthase 2 (488 aa).

A run of 2 helical transmembrane segments spans residues 8–28 (IIINILLVSAFLLNLVFAFII) and 39–59 (IWAWLLVLVFLPLVGFILYLL). 2 consecutive PLD phosphodiesterase domains span residues 223-250 (MNNRNHRKIVVIDGTIGYVGGFNVGDEY) and 401-428 (DNGFLHSKTLVIDDEVASVGTANMDNRS). Residues His228, Lys230, Asp235, His406, Lys408, and Asp413 contribute to the active site.

Belongs to the phospholipase D family. Cardiolipin synthase subfamily.

It is found in the cell membrane. The enzyme catalyses 2 a 1,2-diacyl-sn-glycero-3-phospho-(1'-sn-glycerol) = a cardiolipin + glycerol. In terms of biological role, catalyzes the reversible phosphatidyl group transfer from one phosphatidylglycerol molecule to another to form cardiolipin (CL) (diphosphatidylglycerol) and glycerol. The polypeptide is Cardiolipin synthase 2 (cls2) (Staphylococcus epidermidis (strain ATCC 35984 / DSM 28319 / BCRC 17069 / CCUG 31568 / BM 3577 / RP62A)).